Reading from the N-terminus, the 184-residue chain is Large ribosomal subunit protein uL6 (184 aa).

This sequence belongs to the universal ribosomal protein uL6 family. In terms of assembly, part of the 50S ribosomal subunit.

Its function is as follows. This protein binds to the 23S rRNA, and is important in its secondary structure. It is located near the subunit interface in the base of the L7/L12 stalk, and near the tRNA binding site of the peptidyltransferase center. In Aster yellows witches'-broom phytoplasma (strain AYWB), this protein is Large ribosomal subunit protein uL6.